Consider the following 88-residue polypeptide: VRQELKHELKQGYRDKLVDIREEILRKRRAGKLPGDTASTLKAWWQAHSKWPYPTEEDKARLVQETGLQLKQINNWFINQRKRNWHNN.

Residues 4 to 24 (ELKHELKQGYRDKLVDIREEI) enclose the ELK domain. Positions 25-88 (LRKRRAGKLP…NQRKRNWHNN (64 aa)) form a DNA-binding region, homeobox; TALE-type.

The protein belongs to the TALE/KNOX homeobox family. Expressed in all tissues examined. Highest expression in leaves.

Its subcellular location is the nucleus. The sequence is that of Homeobox protein knotted-1-like 2 (KNOX2) from Zea mays (Maize).